Here is a 253-residue protein sequence, read N- to C-terminus: 1-(5-phosphoribosyl)-5-[(5-phosphoribosylamino)methylideneamino] imidazole-4-carboxamide isomerase (253 aa).

Aspartate 11 functions as the Proton acceptor in the catalytic mechanism. Aspartate 132 (proton donor) is an active-site residue.

This sequence belongs to the HisA/HisF family.

It localises to the cytoplasm. It catalyses the reaction 1-(5-phospho-beta-D-ribosyl)-5-[(5-phospho-beta-D-ribosylamino)methylideneamino]imidazole-4-carboxamide = 5-[(5-phospho-1-deoxy-D-ribulos-1-ylimino)methylamino]-1-(5-phospho-beta-D-ribosyl)imidazole-4-carboxamide. The protein operates within amino-acid biosynthesis; L-histidine biosynthesis; L-histidine from 5-phospho-alpha-D-ribose 1-diphosphate: step 4/9. The polypeptide is 1-(5-phosphoribosyl)-5-[(5-phosphoribosylamino)methylideneamino] imidazole-4-carboxamide isomerase (Methylobacterium nodulans (strain LMG 21967 / CNCM I-2342 / ORS 2060)).